Reading from the N-terminus, the 348-residue chain is D-alanine--D-alanine ligase (348 aa).

Residues 132-334 (KRVLESADIP…YAELIEELVR (203 aa)) form the ATP-grasp domain. ATP is bound at residue 162–217 (EAVLSYPVFVKPANMGSSVGISKAESEEELRAAILLALTYDSRILIEQGVLAREIE). Residues D288, E301, and N303 each coordinate Mg(2+).

Belongs to the D-alanine--D-alanine ligase family. Requires Mg(2+) as cofactor. It depends on Mn(2+) as a cofactor.

It localises to the cytoplasm. It catalyses the reaction 2 D-alanine + ATP = D-alanyl-D-alanine + ADP + phosphate + H(+). Its pathway is cell wall biogenesis; peptidoglycan biosynthesis. Functionally, cell wall formation. In Streptococcus equi subsp. zooepidemicus (strain MGCS10565), this protein is D-alanine--D-alanine ligase.